The primary structure comprises 214 residues: SH3 domain-binding glutamic acid-rich protein (214 aa).

The SH3-binding signature appears at 61–67; sequence NGIPLPP. A disordered region spans residues 101-214; the sequence is PGSKVTKSEE…EEEAGEGEDS (114 aa). Residues 129–144 show a composition bias toward basic and acidic residues; sequence GTEKAEKSGENEAQKE. Composition is skewed to acidic residues over residues 162–192 and 198–214; these read EGED…EAPE and EAEE…GEDS.

Belongs to the SH3BGR family.

This chain is SH3 domain-binding glutamic acid-rich protein (Sh3bgr), found in Mus musculus (Mouse).